The primary structure comprises 401 residues: Protein nanos (401 aa).

The disordered stretch occupies residues Leu-181–Leu-207. Positions Pro-190–Gln-205 are enriched in low complexity. The Nanos-type zinc finger occupies His-318–Lys-372. Residues Cys-319, Cys-322, His-335, Cys-346, Cys-354, Cys-357, His-365, and Cys-370 each coordinate Zn(2+). Short sequence motifs (C2HC) lie at residues Cys-319–Cys-346 and Cys-354–Cys-370.

Belongs to the nanos family. In terms of assembly, interacts with pum and brat. Interacts with cup. Interacts with mei-P26; possibly involved in regulation of brat levels. Interacts with wh; may be involved in mei-P26-dependent derepression of the BMP signaling pathway. Acts via the formation of a quaternary complex composed of pum, nanos, brat and the 3'-UTR mRNA of hb. Binds RNA with no specificity. In terms of tissue distribution, posterior part of the embryo. While the transcript is present throughout the embryo, nanos translation is controlled by smg, and the protein is found in pole plasm and pole cells. In the female ovary expressed in germline stem cells, precystoblasts and in maturing cystoblasts; in early cystoblasts expression is post-transcriptionally repressed by bam in a 3'UTR-dependent manner.

The protein resides in the cytoplasm. It is found in the cytoplasmic ribonucleoprotein granule. Maternal RNA-binding protein that is required for germ cells proliferation and self-renewal. Acts by forming a complex with pum and brat that regulates translation and mRNA stability. The complex binds to the Nanos Response Element (NRE), a 16 bp sequence in the hb mRNA 3'-UTR and prevents its translation. Controls posterior development. Rescuing factor for the abdominal defect of posterior group mutants. The other posterior group genes are not required for nanos function but rather play a role in localization or distribution of nanos protein. This chain is Protein nanos, found in Drosophila melanogaster (Fruit fly).